A 144-amino-acid polypeptide reads, in one-letter code: MKPRHKRALIIIAALIAIGVAALLILNALNSNIALYVTPSEVAAGKAPQGQAFRIGGMVKDGSLKRDGLTVHFVITDLAKDIPVAYIGILPDLFKEGKGAVIQGRMNANGEFIASEVLAKHDENYMPPEAKHALDQAQKNGSAK.

Residues 1 to 7 (MKPRHKR) are Cytoplasmic-facing. Residues 8–28 (ALIIIAALIAIGVAALLILNA) form a helical; Signal-anchor for type II membrane protein membrane-spanning segment. Over 29 to 144 (LNSNIALYVT…DQAQKNGSAK (116 aa)) the chain is Periplasmic. The heme site is built by His121 and Tyr125.

This sequence belongs to the CcmE/CycJ family.

It localises to the cell inner membrane. Functionally, heme chaperone required for the biogenesis of c-type cytochromes. Transiently binds heme delivered by CcmC and transfers the heme to apo-cytochromes in a process facilitated by CcmF and CcmH. The protein is Cytochrome c-type biogenesis protein CcmE of Polynucleobacter necessarius subsp. necessarius (strain STIR1).